Consider the following 462-residue polypeptide: Integrator complex subunit 12 (462 aa).

Residues 42 to 132 are disordered; it reads GIDSSYRPSQ…PETQSSPITV (91 aa). The span at 59–86 shows a compositional bias: polar residues; it reads ISSTKNISIKQEPKISSSLPSGNNNGKV. Lys68 participates in a covalent cross-link: Glycyl lysine isopeptide (Lys-Gly) (interchain with G-Cter in SUMO2). The span at 88–124 shows a compositional bias: basic and acidic residues; the sequence is TTEKVKKEAEKRPADKMKSDITEGVDIPKKPRLEKPE. The residue at position 128 (Ser128) is a Phosphoserine. A PHD-type zinc finger spans residues 159–215; that stretch reads GLACVVCRQMMVASGNQLVECQECHNLYHRDCHKPQVTDKEANDPRLVWYCARCTRQ. Lys254 is covalently cross-linked (Glycyl lysine isopeptide (Lys-Gly) (interchain with G-Cter in SUMO2)). Positions 301 to 328 are enriched in polar residues; that stretch reads SSAGPSTAKLSSTTQNNTGKPATSSANQ. The disordered stretch occupies residues 301–462; it reads SSAGPSTAKL…KKAAQKKLKK (162 aa). Low complexity-rich tracts occupy residues 347-358 and 382-437; these read KIGSNNSTTPTV and VSKV…GPTS. Positions 449-462 are enriched in basic residues; that stretch reads QMVKKKAAQKKLKK.

This sequence belongs to the Integrator subunit 12 family. Component of the Integrator complex, composed of core subunits INTS1, INTS2, INTS3, INTS4, INTS5, INTS6, INTS7, INTS8, INTS9/RC74, INTS10, INTS11/CPSF3L, INTS12, INTS13, INTS14 and INTS15. The core complex associates with protein phosphatase 2A subunits PPP2CA and PPP2R1A, to form the Integrator-PP2A (INTAC) complex. Post-translationally, dephosphorylated at Ser-128 by the PNUTS-PP1 complex, promoting RNA polymerase II transcription pause-release.

The protein resides in the nucleus. In terms of biological role, component of the integrator complex, a multiprotein complex that terminates RNA polymerase II (Pol II) transcription in the promoter-proximal region of genes. The integrator complex provides a quality checkpoint during transcription elongation by driving premature transcription termination of transcripts that are unfavorably configured for transcriptional elongation: the complex terminates transcription by (1) catalyzing dephosphorylation of the C-terminal domain (CTD) of Pol II subunit POLR2A/RPB1 and SUPT5H/SPT5, (2) degrading the exiting nascent RNA transcript via endonuclease activity and (3) promoting the release of Pol II from bound DNA. The integrator complex is also involved in terminating the synthesis of non-coding Pol II transcripts, such as enhancer RNAs (eRNAs), small nuclear RNAs (snRNAs), telomerase RNAs and long non-coding RNAs (lncRNAs). Mediates recruitment of cytoplasmic dynein to the nuclear envelope, probably as component of the integrator complex. This chain is Integrator complex subunit 12, found in Homo sapiens (Human).